We begin with the raw amino-acid sequence, 196 residues long: Large ribosomal subunit protein eL15 (196 aa).

The disordered stretch occupies residues 154 to 196; that stretch reads PGHRGRSERGLTSAGVKGRGMRRRGKGTEKCRPSVRANANRAK.

Belongs to the eukaryotic ribosomal protein eL15 family.

This chain is Large ribosomal subunit protein eL15, found in Methanospirillum hungatei JF-1 (strain ATCC 27890 / DSM 864 / NBRC 100397 / JF-1).